We begin with the raw amino-acid sequence, 292 residues long: Homoserine kinase (292 aa).

84–94 (PLSRGLGSSSA) is a binding site for ATP.

It belongs to the GHMP kinase family. Homoserine kinase subfamily.

Its subcellular location is the cytoplasm. It carries out the reaction L-homoserine + ATP = O-phospho-L-homoserine + ADP + H(+). It functions in the pathway amino-acid biosynthesis; L-threonine biosynthesis; L-threonine from L-aspartate: step 4/5. Functionally, catalyzes the ATP-dependent phosphorylation of L-homoserine to L-homoserine phosphate. This chain is Homoserine kinase, found in Campylobacter jejuni subsp. jejuni serotype O:6 (strain 81116 / NCTC 11828).